The following is a 234-amino-acid chain: Opacity protein opA51 (234 aa).

A1 is a signal peptide.

Belongs to the opacity porin family.

The protein resides in the cell outer membrane. Its function is as follows. Implicated in a number of adherence functions. OPA proteins are implicated in pathogenesis and are subject to phase variation. The chain is Opacity protein opA51 (opaB) from Neisseria gonorrhoeae.